A 464-amino-acid chain; its full sequence is UDP-N-acetylmuramoylalanine--D-glutamate ligase (464 aa).

ATP is bound at residue 112 to 118 (GTDGKTT).

This sequence belongs to the MurCDEF family.

The protein resides in the cytoplasm. It carries out the reaction UDP-N-acetyl-alpha-D-muramoyl-L-alanine + D-glutamate + ATP = UDP-N-acetyl-alpha-D-muramoyl-L-alanyl-D-glutamate + ADP + phosphate + H(+). It participates in cell wall biogenesis; peptidoglycan biosynthesis. Cell wall formation. Catalyzes the addition of glutamate to the nucleotide precursor UDP-N-acetylmuramoyl-L-alanine (UMA). This chain is UDP-N-acetylmuramoylalanine--D-glutamate ligase, found in Pelodictyon phaeoclathratiforme (strain DSM 5477 / BU-1).